Here is a 413-residue protein sequence, read N- to C-terminus: Ras association domain-containing protein 5 (413 aa).

Residues 1–103 (MASPAIGQRP…RPRDVRSIFE (103 aa)) are disordered. The span at 52–74 (SEDRGGRRSGRRDPEPTPRDCRH) shows a compositional bias: basic and acidic residues. A Phorbol-ester/DAG-type zinc finger spans residues 117–165 (GHRFVELALRGGPGWCDLCGREVLRQALRCANCKFTCHSECRSLIQLDC). Serine 177 and serine 274 each carry phosphoserine. In terms of domain architecture, Ras-associating spans 265–359 (PAATTDKRTS…LSFVLKENET (95 aa)). A Phosphothreonine modification is found at threonine 347. In terms of domain architecture, SARAH spans 361–408 (EVEWDAFSIPELQNFLTILEKEEQDKIHQLQKKYNKFRQKLEEALRES).

Interacts directly with activated HRAS; a RASSF5-STK4/MST1 complex probably associates with activated HRAS. Interacts with KRAS. Probably interacts with Ras-like GTPases RRAS, MRAS, RAP1B, RAP2A and RALA. Interacts with RRAS2. Can self-associate. Interacts with RSSF1 isoform A. The RSSF1 isoform A-RSSF5 heterodimer probably mediates the association of RSSF1 with HRAS. Isoform 2 interacts with activated RAP1A and ITGAL/LFA-1. Binds STK4/MST1, inhibiting STK4/MST1 autoactivation.

The protein resides in the cytoplasm. Its subcellular location is the cytoskeleton. Functionally, potential tumor suppressor. Seems to be involved in lymphocyte adhesion by linking RAP1A activation upon T-cell receptor or chemokine stimulation to integrin activation. Isoform 2 stimulates lymphocyte polarization and the patch-like distribution of ITGAL/LFA-1, resulting in an enhanced adhesion to ICAM1. Together with RAP1A may participate in regulation of microtubule growth. The association of isoform 2 with activated RAP1A is required for directional movement of endothelial cells during wound healing. May be involved in regulation of Ras apoptotic function. The RASSF5-STK4/MST1 complex may mediate HRAS and KRAS induced apoptosis. This chain is Ras association domain-containing protein 5 (Rassf5), found in Mus musculus (Mouse).